The following is a 183-amino-acid chain: Type II secretion system protein H (183 aa).

A propeptide spans 1-8 (leader sequence); the sequence is MRRHRQSG. At F9 the chain carries N-methylphenylalanine. The chain crosses the membrane as a helical span at residues 9 to 28; it reads FTLLEVLLVAMLMGLVATAV.

The protein belongs to the GSP H family. In terms of assembly, type II secretion is composed of four main components: the outer membrane complex, the inner membrane complex, the cytoplasmic secretion ATPase and the periplasm-spanning pseudopilus. Interacts with core component ExeG. Cleaved by prepilin peptidase. In terms of processing, methylated by prepilin peptidase at the amino group of the N-terminal phenylalanine once the leader sequence is cleaved by prepilin peptidase.

It localises to the cell inner membrane. Its function is as follows. Component of the type II secretion system required for the energy-dependent secretion of extracellular factors such as proteases and toxins from the periplasm. Part of the pseudopilus tip complex that is critical for the recognition and binding of secretion substrates. This chain is Type II secretion system protein H (exeH), found in Aeromonas hydrophila.